We begin with the raw amino-acid sequence, 399 residues long: UDP-galactopyranose mutase (399 aa).

Residues S25, 44-45 (EK), N52, and 71-72 (HI) contribute to the FAD site. Residues S171, W175, Y200, N297, R306, and Y345 each contribute to the UDP-alpha-D-galactose site. R374 contacts FAD. Position 380 (Y380) interacts with UDP-alpha-D-galactose. 381 to 386 (IDMDRA) contacts FAD.

Belongs to the UDP-galactopyranose/dTDP-fucopyranose mutase family. It depends on FAD as a cofactor.

It carries out the reaction UDP-alpha-D-galactose = UDP-alpha-D-galactofuranose. Functionally, involved in the conversion of UDP-GalP into UDP-GalF through a 2-keto intermediate. In Mycoplasma pneumoniae (strain ATCC 29342 / M129 / Subtype 1) (Mycoplasmoides pneumoniae), this protein is UDP-galactopyranose mutase (glf).